A 1703-amino-acid chain; its full sequence is Gingipain R1 (1703 aa).

Residues 1–20 form the signal peptide; the sequence is MNKFVSIALCSSLLGGMAFA. Residues 21–224 constitute a propeptide that is removed on maturation; the sequence is QQTELGRNPN…RMFMNYEPGR (204 aa). Ca(2+) is bound by residues aspartate 302, valine 324, aspartate 327, tyrosine 329, glutamate 331, glutamate 385, and histidine 390. Catalysis depends on histidine 435, which acts as the Proton donor. Residue cysteine 468 is the Nucleophile of the active site. The Ca(2+) site is built by phenylalanine 473, glutamate 482, aspartate 516, glutamate 517, glutamate 520, and histidine 526. Residues 940–968 form a disordered region; sequence WDAPNGTPNPNPNPNPNPNPGTTTLSESF. Residues 946 to 958 show a composition bias toward pro residues; sequence TPNPNPNPNPNPN.

It belongs to the peptidase C25 family.

The protein localises to the secreted. It catalyses the reaction Hydrolysis of proteins and small molecule substrates, with a preference for Arg in P1.. Thiol protease. Acts synergistically with RgpB to catalyze the maturation of fimbrial subunits, such as FimA. Its proteolytic activity is a major factor in both periodontal tissue destruction and in evasion of host defense mechanisms. The protein is Gingipain R1 of Porphyromonas gingivalis (strain ATCC 33277 / DSM 20709 / CIP 103683 / JCM 12257 / NCTC 11834 / 2561).